Reading from the N-terminus, the 396-residue chain is Elongation factor Tu (396 aa).

The 197-residue stretch at 10–206 (KPHVNVGTIG…TMDSYIPEPV (197 aa)) folds into the tr-type G domain. The tract at residues 19-26 (GHVDHGKT) is G1. 19 to 26 (GHVDHGKT) contributes to the GTP binding site. Thr-26 lines the Mg(2+) pocket. The G2 stretch occupies residues 60–64 (GITIS). The interval 81–84 (DCPG) is G3. GTP-binding positions include 81–85 (DCPGH) and 136–139 (NKAD). The segment at 136–139 (NKAD) is G4. The segment at 174 to 176 (SAL) is G5.

This sequence belongs to the TRAFAC class translation factor GTPase superfamily. Classic translation factor GTPase family. EF-Tu/EF-1A subfamily. Monomer.

The protein resides in the cytoplasm. The enzyme catalyses GTP + H2O = GDP + phosphate + H(+). GTP hydrolase that promotes the GTP-dependent binding of aminoacyl-tRNA to the A-site of ribosomes during protein biosynthesis. In Legionella pneumophila (strain Paris), this protein is Elongation factor Tu.